Reading from the N-terminus, the 830-residue chain is Protein PAM1 (830 aa).

A coiled-coil region spans residues 379-400 (LQNSESTLKNEIKELQSQVLSL). 4 disordered regions span residues 426-488 (DNSL…ETSL), 513-558 (ALQQ…SQPQ), 648-699 (NGMN…NYNI), and 727-757 (SRNA…GTSK). The span at 433–444 (PNSNTNGISPSD) shows a compositional bias: polar residues. A coiled-coil region spans residues 481–514 (LSRDETSLKERELEVRMKELELQERELELQRKAL). Low complexity-rich tracts occupy residues 513 to 527 (ALQQ…PPKQ) and 538 to 555 (SGNN…SSYS). A compositionally biased stretch (polar residues) spans 651-699 (NGTQSRLNSLSNQSTFRSQQGPPITQQKSFQNNGGSMRTNRIPSANYNI). Serine 659 and serine 732 each carry phosphoserine. Low complexity predominate over residues 738 to 753 (QLNSDSPPQLQSLSQN). A Phosphoserine modification is found at serine 767. A compositionally biased stretch (polar residues) spans 796 to 806 (AATANNISTMG). The disordered stretch occupies residues 796-830 (AATANNISTMGDESRKEDVKEKKKKKFSFFGKRKK). Residues 807–816 (DESRKEDVKE) are compositionally biased toward basic and acidic residues. Positions 817-830 (KKKKKFSFFGKRKK) are enriched in basic residues.

The protein belongs to the PAM1/SVL3 family.

Its function is as follows. Not known. It is a suppressor of protein phosphatase 2A depletion. This is Protein PAM1 (PAM1) from Saccharomyces cerevisiae (strain ATCC 204508 / S288c) (Baker's yeast).